The sequence spans 145 residues: Large ribosomal subunit protein bL19 (145 aa).

This sequence belongs to the bacterial ribosomal protein bL19 family.

Functionally, this protein is located at the 30S-50S ribosomal subunit interface and may play a role in the structure and function of the aminoacyl-tRNA binding site. The polypeptide is Large ribosomal subunit protein bL19 (Brucella abortus (strain S19)).